Consider the following 1162-residue polypeptide: Isoleucine--tRNA ligase (1162 aa).

The 'HIGH' region motif lies at 50–60 (PSANGMPGIHH). A 'KMSKS' region motif is present at residues 710–714 (KMSKR). Lysine 713 provides a ligand contact to ATP.

Belongs to the class-I aminoacyl-tRNA synthetase family. IleS type 2 subfamily. In terms of assembly, monomer. The cofactor is Zn(2+).

The protein localises to the cytoplasm. The enzyme catalyses tRNA(Ile) + L-isoleucine + ATP = L-isoleucyl-tRNA(Ile) + AMP + diphosphate. In terms of biological role, catalyzes the attachment of isoleucine to tRNA(Ile). As IleRS can inadvertently accommodate and process structurally similar amino acids such as valine, to avoid such errors it has two additional distinct tRNA(Ile)-dependent editing activities. One activity is designated as 'pretransfer' editing and involves the hydrolysis of activated Val-AMP. The other activity is designated 'posttransfer' editing and involves deacylation of mischarged Val-tRNA(Ile). The chain is Isoleucine--tRNA ligase from Bacteroides thetaiotaomicron (strain ATCC 29148 / DSM 2079 / JCM 5827 / CCUG 10774 / NCTC 10582 / VPI-5482 / E50).